The following is a 262-amino-acid chain: Ubiquinone biosynthesis protein COQ4, mitochondrial (262 aa).

H154, D155, H158, and E170 together coordinate Zn(2+). A disordered region spans residues 243–262; the sequence is LGIEQPPDLRQMKKDMAKKK. Basic and acidic residues predominate over residues 252 to 262; that stretch reads RQMKKDMAKKK.

It belongs to the COQ4 family. In terms of assembly, component of a multi-subunit COQ enzyme complex, composed of at least COQ3, COQ4, COQ5, COQ6, COQ7 and COQ9. Zn(2+) serves as cofactor.

The protein resides in the mitochondrion inner membrane. The enzyme catalyses a 4-hydroxy-3-methoxy-5-(all-trans-polyprenyl)benzoate + H(+) = a 2-methoxy-6-(all-trans-polyprenyl)phenol + CO2. Its pathway is cofactor biosynthesis; ubiquinone biosynthesis. Lyase that catalyzes the C1-decarboxylation of 4-hydroxy-3-methoxy-5-(all-trans-polyprenyl)benzoic acid into 2-methoxy-6-(all-trans-polyprenyl)phenol during ubiquinone biosynthesis. The polypeptide is Ubiquinone biosynthesis protein COQ4, mitochondrial (Yarrowia lipolytica (strain CLIB 122 / E 150) (Yeast)).